Reading from the N-terminus, the 132-residue chain is MSLSDPIANFLTSIRNGQLSMNKVIVVSYSYVIHAILQILLSEGYIDGFTEKSKGSNIKFFEVKLKYYNGAPVISQIARISKPGKRCYCSAKDMPKFYNGLGLYIISTSKGIMSDYNARKSGVGGEILCGVF.

This sequence belongs to the universal ribosomal protein uS8 family. Part of the 30S ribosomal subunit. Contacts proteins S5 and S12.

Its function is as follows. One of the primary rRNA binding proteins, it binds directly to 16S rRNA central domain where it helps coordinate assembly of the platform of the 30S subunit. The sequence is that of Small ribosomal subunit protein uS8 from Ehrlichia chaffeensis (strain ATCC CRL-10679 / Arkansas).